A 276-amino-acid polypeptide reads, in one-letter code: 4-deoxy-L-threo-5-hexosulose-uronate ketol-isomerase (276 aa).

The Zn(2+) site is built by His194, His196, Glu201, and His243.

The protein belongs to the KduI family. Zn(2+) is required as a cofactor.

It catalyses the reaction 5-dehydro-4-deoxy-D-glucuronate = 3-deoxy-D-glycero-2,5-hexodiulosonate. Its pathway is glycan metabolism; pectin degradation; 2-dehydro-3-deoxy-D-gluconate from pectin: step 4/5. Catalyzes the isomerization of 5-dehydro-4-deoxy-D-glucuronate to 3-deoxy-D-glycero-2,5-hexodiulosonate. This Shouchella clausii (strain KSM-K16) (Alkalihalobacillus clausii) protein is 4-deoxy-L-threo-5-hexosulose-uronate ketol-isomerase.